A 206-amino-acid polypeptide reads, in one-letter code: MGYIVALTGGIGSGKSTVANAFADLGINVIDADIIARQVVEPGAPALHAIADHFGENMIAADGTLQRRALRERIFANPEEKNWLNDLLHPLIQQETQHQIQQATSPYVLWVVPLLVENSLYKKANRVLVVDVSPETQLKRTMQRDDVTREHVEQILAAQATREARLAVADDVIDNNGAPDAIASDVARLHAHYLQLASQFVSQEKP.

Residues 4–200 (IVALTGGIGS…AHYLQLASQF (197 aa)) enclose the DPCK domain. Residue 12–17 (GSGKST) participates in ATP binding.

This sequence belongs to the CoaE family.

It is found in the cytoplasm. It carries out the reaction 3'-dephospho-CoA + ATP = ADP + CoA + H(+). The protein operates within cofactor biosynthesis; coenzyme A biosynthesis; CoA from (R)-pantothenate: step 5/5. Catalyzes the phosphorylation of the 3'-hydroxyl group of dephosphocoenzyme A to form coenzyme A. The polypeptide is Dephospho-CoA kinase (Shigella flexneri).